Reading from the N-terminus, the 422-residue chain is Pre-B-cell leukemia transcription factor 2 (422 aa).

Positions 1–43 (MDEQGRLMQARGVGIPGHPIHGGPQTLTPHPMHEPPADNGEPR) are disordered. Positions 31-43 (PMHEPPADNGEPR) are enriched in basic and acidic residues. In terms of domain architecture, PBC spans 42–236 (PRKQDIGDIL…VMILRSRFLD (195 aa)). A PBC-A region spans residues 49–128 (DILQQIMTIT…EGVAGPEKGG (80 aa)). A PBC-B region spans residues 131-236 (AAAAAAAAAS…VMILRSRFLD (106 aa)). Residues 237–299 (ARRKRRNFSK…NKRIRYKKNI (63 aa)) constitute a DNA-binding region (homeobox). Disordered stretches follow at residues 319–341 (QGGH…GSFN) and 353–422 (QGLN…DTSN). Residues 401–410 (VTPSSVTSPT) show a composition bias toward polar residues.

The protein belongs to the TALE/PBX homeobox family.

It localises to the nucleus. Transcriptional activator that binds the sequence 5'-ATCAATCAA-3'. In Xenopus tropicalis (Western clawed frog), this protein is Pre-B-cell leukemia transcription factor 2.